A 151-amino-acid chain; its full sequence is MNWAPATCWALLLAAAFLCDSGAAKGGRGGARGSARGGVRGGARGASRVRVRPAQRYGAPGSSLRVAAAGAAAGAAAGAAAGLAAGSGWRRAAGPGERGLEDEEDGVPGGNGTGPGIYSYRAWTSGAGPTRGPRLCLVLGGALGALGLLRP.

An N-terminal signal peptide occupies residues 1-24 (MNWAPATCWALLLAAAFLCDSGAA). The interval 89-113 (WRRAAGPGERGLEDEEDGVPGGNGT) is disordered. N111 carries N-linked (GlcNAc...) asparagine glycosylation. G126 carries the GPI-anchor amidated glycine lipid modification. Positions 127-151 (AGPTRGPRLCLVLGGALGALGLLRP) are cleaved as a propeptide — removed in mature form.

The protein belongs to the SPRN family. N-glycosylated. In terms of tissue distribution, mainly expressed in brain. In brain, it is expressed in hippocampus.

It localises to the cell membrane. Prion-like protein that has PrP(C)-like neuroprotective activity. May act as a modulator for the biological actions of normal and abnormal PrP. This Homo sapiens (Human) protein is Shadow of prion protein (SPRN).